The primary structure comprises 424 residues: O-methyltransferase bfoD (424 aa).

S-adenosyl-L-methionine is bound at residue aspartate 275. Residue histidine 326 is the Proton acceptor of the active site.

This sequence belongs to the class I-like SAM-binding methyltransferase superfamily. Cation-independent O-methyltransferase family.

Its pathway is secondary metabolite biosynthesis. Functionally, cytochrome P450 monooxygenase; part of the gene cluster that mediates the biosynthesis of bifonsecin B, a dimeric gamma-naphthopyrone. The first step in the biosynthesis of bifonsecin B is the production of gamma-naphthopyrone precursor YWA1 by the non-reducing polyketide synthase albA, via condensation of one acetyl-CoA starter unit with 6 malonyl-CoA units. YWA1 is then methylated by bfoE at position C-6 to yield foncesin which is further methylated at position C-8 by bfoD to produce fonsecin B. A key enzyme in the biosynthetic pathway is the cytochrome P450 monooxygenase bfoB which catalyzes the oxidative dimerization of fonsecin B to bifonsecin B. Bfob also catalyzes the oxidative dimerization of rubrofusarin B into nigerone. The stereoselectivity of bfoB is influenced by the two natural monomeric substrates; homodimerization of fonsecin B yields a stereochemically pure biaryl, M-foncerine B, while rubrofusarin B yields a mixture of enantiomers M- and P-nigerone. This Aspergillus brasiliensis (strain CBS 101740 / IMI 381727 / IBT 21946) protein is O-methyltransferase bfoD.